The sequence spans 166 residues: Interferon gamma (166 aa).

An N-terminal signal peptide occupies residues 1-23 (MKYTSYILAFQLCIVLGSLGCYC). Gln-24 carries the pyrrolidone carboxylic acid modification. An N-linked (GlcNAc...) asparagine glycan is attached at Asn-48. A glycan (N-linked (GlcNAc...) asparagine; in dimeric form) is linked at Asn-120. Residues 147–166 (AKTGKRKRSQMLFRGRRASQ) are disordered. Positions 149–166 (TGKRKRSQMLFRGRRASQ) are enriched in basic residues. The propeptide occupies 162–166 (RRASQ).

Belongs to the type II (or gamma) interferon family. In terms of assembly, homodimer. Interacts with IFNGR1 (via extracellular domain); this interaction promotes IFNGR1 dimerization. Proteolytic processing produces C-terminal heterogeneity, with proteins ending alternatively at Gly-150, Met-157 or Gly-161. In terms of tissue distribution, released primarily from activated T lymphocytes.

The protein resides in the secreted. Type II interferon produced by immune cells such as T-cells and NK cells that plays crucial roles in antimicrobial, antiviral, and antitumor responses by activating effector immune cells and enhancing antigen presentation. Primarily signals through the JAK-STAT pathway after interaction with its receptor IFNGR1 to affect gene regulation. Upon IFNG binding, IFNGR1 intracellular domain opens out to allow association of downstream signaling components JAK2, JAK1 and STAT1, leading to STAT1 activation, nuclear translocation and transcription of IFNG-regulated genes. Many of the induced genes are transcription factors such as IRF1 that are able to further drive regulation of a next wave of transcription. Plays a role in class I antigen presentation pathway by inducing a replacement of catalytic proteasome subunits with immunoproteasome subunits. In turn, increases the quantity, quality, and repertoire of peptides for class I MHC loading. Increases the efficiency of peptide generation also by inducing the expression of activator PA28 that associates with the proteasome and alters its proteolytic cleavage preference. Up-regulates as well MHC II complexes on the cell surface by promoting expression of several key molecules such as cathepsins B/CTSB, H/CTSH, and L/CTSL. Participates in the regulation of hematopoietic stem cells during development and under homeostatic conditions by affecting their development, quiescence, and differentiation. The polypeptide is Interferon gamma (IFNG) (Homo sapiens (Human)).